The following is a 349-amino-acid chain: Twinfilin-2-A (349 aa).

2 consecutive ADF-H domains span residues 4 to 139 (QTGI…KHVS) and 177 to 313 (GLSF…DEVH). Positions 321-349 (QAFAKPKGPAGKRGQKRLIKGPGENGEDS) are disordered.

Belongs to the actin-binding proteins ADF family. Twinfilin subfamily. Interacts with G-actin; ADP-actin form and capping protein (CP).

It localises to the cytoplasm. Its subcellular location is the cytoskeleton. The protein localises to the perinuclear region. Its function is as follows. Actin-binding protein involved in motile and morphological processes. Inhibits actin polymerization, likely by sequestering G-actin. In Xenopus laevis (African clawed frog), this protein is Twinfilin-2-A (twf2-a).